The following is a 795-amino-acid chain: Phospholipase A-2-activating protein (795 aa).

7 WD repeats span residues 17–56 (HELDVRGLVCCAYPPGAFVSVSRDRTTRLWAPDSPNRSFT), 63–107 (GHSN…PLYI), 110–148 (GHKNTVCSLSSGKFGTLLSGSWDTTAKVWLNDKCMMTLQ), 149–188 (GHTAAVWAVKILPEQGLMLTGSADKTVKLWKAGRCERTFS), 190–227 (HEDCVRGLAILSETEFLSCANDASIRRWQITGECLEVY), 229–268 (GHTNYIYSISVFPNCRDFVTTAEDRSLRIWKHGECAQTIR), and 270–307 (PAQSIWCCCVLDNGDIVVGASDGIIRVFTESEDRTASA). Phosphoserine is present on Ser-50. The PFU domain occupies 366–465 (QWSVSEGRWI…KGQMLGLGNP (100 aa)). Lys-529 carries the post-translational modification N6-acetyllysine. In terms of domain architecture, PUL spans 533–794 (IYFPKKEAVT…SECCRFILNL (262 aa)). ARM repeat units lie at residues 546–588 (ANPT…NSSS), 589–620 (EKPTVQQLQILWKAINCPEDIVFPALDILRLS), 621–669 (IKHP…CFVG), 670–715 (QAGQ…CFHK), 716–755 (DHNIEGKAQCLSLISTILEVVQDLEATFRLLVALGTLISD), and 756–795 (DSNAVQLAKSLGVDSQIKKYSSVSEPAKVSECCRFILNLL).

This sequence belongs to the WD repeat PLAP family. Interacts with ubiquitin. Interacts with UBXN6, VCP and YOD1; may form a complex involved in macroautophagy.

It localises to the nucleus. Its subcellular location is the cytoplasm. The protein localises to the synapse. Functionally, plays a role in protein ubiquitination, sorting and degradation through its association with VCP. Involved in ubiquitin-mediated membrane proteins trafficking to late endosomes in an ESCRT-dependent manner, and hence plays a role in synaptic vesicle recycling. May play a role in macroautophagy, regulating for instance the clearance of damaged lysosomes. Plays a role in cerebellar Purkinje cell development. Positively regulates cytosolic and calcium-independent phospholipase A2 activities in a tumor necrosis factor alpha (TNF-alpha)- or lipopolysaccharide (LPS)-dependent manner, and hence prostaglandin E2 biosynthesis. This Homo sapiens (Human) protein is Phospholipase A-2-activating protein (PLAA).